A 502-amino-acid polypeptide reads, in one-letter code: Aspartyl/glutamyl-tRNA(Asn/Gln) amidotransferase subunit B (502 aa).

This sequence belongs to the GatB/GatE family. GatB subfamily. As to quaternary structure, heterotrimer of A, B and C subunits.

It catalyses the reaction L-glutamyl-tRNA(Gln) + L-glutamine + ATP + H2O = L-glutaminyl-tRNA(Gln) + L-glutamate + ADP + phosphate + H(+). It carries out the reaction L-aspartyl-tRNA(Asn) + L-glutamine + ATP + H2O = L-asparaginyl-tRNA(Asn) + L-glutamate + ADP + phosphate + 2 H(+). In terms of biological role, allows the formation of correctly charged Asn-tRNA(Asn) or Gln-tRNA(Gln) through the transamidation of misacylated Asp-tRNA(Asn) or Glu-tRNA(Gln) in organisms which lack either or both of asparaginyl-tRNA or glutaminyl-tRNA synthetases. The reaction takes place in the presence of glutamine and ATP through an activated phospho-Asp-tRNA(Asn) or phospho-Glu-tRNA(Gln). In Arthrobacter sp. (strain FB24), this protein is Aspartyl/glutamyl-tRNA(Asn/Gln) amidotransferase subunit B.